The sequence spans 699 residues: MNLLPKSSREFGSVDYWEKFFQQRGKKAFEWYGTYLELCGVLHKYIKPREKVLVIGCGNSELSEQLYDVGYRDIVNIDISEVVIKQMKECNATRRPQMSFLKMDMTQMEFPDASFQVVLDKGTLDAVLTDEEEKTLQQVDRMLAEVGRVLQVGGRYLCISLAQAHILKKAVGHFSREGWMVRVHQVANSQDQVLEAEPQFSLPVFAFIMTKFRPVPGSALQIFELCAQEQRKPVRLESAERLAEAVQERQQYAWLCSQLRRKARLGSVSLDLCDGDTGEPRYTLHVVDSPTVKPSRDNHFAIFIIPQGRETEWLFGMDEGRKQLAASAGFRRLITVALHRGQQYESMDHIQAELSARVMELAPAGMPTQQQVPFLSVGGDIGVRTVQHQDCSPLSGDYVIEDVQGDDKRYFRRLIFLSNRNVVQSEARLLKDVSHKAQKKRKKDRKKQRPADAEDLPAAPGQSIDKSYLCCEHHKAMIAGLALLRNPELLLEIPLALLVVGLGGGSLPLFVHDHFPKSCIDAVEIDPSMLEVATQWFGFSQSDRMKVHIADGLDYIASLAGGGEARPCYDVIMFDVDSKDPTLGMSCPPPAFVEQSFLQKVKSILTPEGVFILNLVCRDLGLKDSVLAGLKAVFPLLYVRRIEGEVNEILFCQLHPEQKLATPELLETAQALERTLRKPGRGWDDTYVLSDMLKTVKIV.

N-acetylmethionine is present on Met1. At Ser267 the chain carries Phosphoserine. Residues 433 to 459 (VSHKAQKKRKKDRKKQRPADAEDLPAA) are disordered. Over residues 436–448 (KAQKKRKKDRKKQ) the composition is skewed to basic residues.

The protein belongs to the methyltransferase superfamily. Forms a tripartite complex containing GAB1, METTL13 and SPRY2. Within the complex interacts with GAB1 and SPRY2.

The protein resides in the cytoplasm. It is found in the nucleus. The protein localises to the mitochondrion. The enzyme catalyses L-lysyl-[protein] + S-adenosyl-L-methionine = N(6)-methyl-L-lysyl-[protein] + S-adenosyl-L-homocysteine + H(+). The catalysed reaction is N(6)-methyl-L-lysyl-[protein] + S-adenosyl-L-methionine = N(6),N(6)-dimethyl-L-lysyl-[protein] + S-adenosyl-L-homocysteine + H(+). It carries out the reaction N-terminal glycyl-L-lysyl-L-glutamyl-[protein] + 3 S-adenosyl-L-methionine = N-terminal N,N,N-trimethyl-glycyl-L-lysyl-L-glutamyl-[protein] + 3 S-adenosyl-L-homocysteine + 3 H(+). With respect to regulation, protein N-terminal methyltransferase activity is inhibited by GTP and GDP. Dual methyltransferase that catalyzes methylation of elongation factor 1-alpha (EEF1A1 and EEF1A2) at two different positions, and is therefore involved in the regulation of mRNA translation. Via its C-terminus, methylates EEF1A1 and EEF1A2 at the N-terminal residue 'Gly-2'. Via its N-terminus dimethylates EEF1A1 and EEF1A2 at residue 'Lys-55'. Has no activity towards core histones H2A, H2B, H3 and H4. This Homo sapiens (Human) protein is eEF1A lysine and N-terminal methyltransferase.